A 64-amino-acid chain; its full sequence is Potassium channel toxin kappa-KTx 4.1 (64 aa).

The first 26 residues, 1 to 26, serve as a signal peptide directing secretion; the sequence is MKSTLMTASLLILVVLFIIDYASVYA. Residues 27 to 38 constitute a propeptide that is removed on maturation; the sequence is EFIDGEISLERE. Cystine bridges form between cysteine 43/cysteine 61 and cysteine 47/cysteine 57.

It belongs to the short scorpion toxin superfamily. Potassium channel inhibitor kappa-KTx family. Kappa-KTx 4 subfamily. Expressed by the venom gland.

It is found in the secreted. Functionally, potassium channel inhibitor (Kv). This is Potassium channel toxin kappa-KTx 4.1 from Heterometrus petersii (Asian forest scorpion).